The following is a 184-amino-acid chain: Transcription termination/antitermination protein NusG (184 aa).

The protein belongs to the NusG family.

Its function is as follows. Participates in transcription elongation, termination and antitermination. The protein is Transcription termination/antitermination protein NusG of Borreliella burgdorferi (strain ATCC 35210 / DSM 4680 / CIP 102532 / B31) (Borrelia burgdorferi).